The following is a 159-amino-acid chain: Small ribosomal subunit protein uS9 (159 aa).

It belongs to the universal ribosomal protein uS9 family.

The chain is Small ribosomal subunit protein uS9 from Rickettsia peacockii (strain Rustic).